Consider the following 326-residue polypeptide: MEMO1 family protein TTHA0924 (326 aa).

Belongs to the MEMO1 family.

This chain is MEMO1 family protein TTHA0924, found in Thermus thermophilus (strain ATCC 27634 / DSM 579 / HB8).